Consider the following 1030-residue polypeptide: Alpha-L-rhamnosidase (1030 aa).

Positions 133–297 are carbohydrate-binding module-67 (CBM67); that stretch reads PSLEGSSWIW…GAGPWGRVAP (165 aa). Asp-179 and Asn-180 together coordinate Ca(2+). Residues 179-180 and Trp-203 contribute to the alpha-L-rhamnose site; that span reads DN. Residues Asn-228 and Pro-233 each coordinate Ca(2+). Alpha-L-rhamnose contacts are provided by residues Asp-630, 634–636, Asp-643, and Trp-695; that span reads RDE. Glu-636 (proton donor) is an active-site residue. Glu-895 serves as the catalytic Proton acceptor. His-916 contacts alpha-L-rhamnose.

This sequence belongs to the glycosyl hydrolase 78 family.

It catalyses the reaction Hydrolysis of terminal non-reducing alpha-L-rhamnose residues in alpha-L-rhamnosides.. Alpha-L-rhamnosidase which is able to degrade p-nitrophenyl-alpha-L-rhamnopyranoside (PNP-Rha) in vitro. Releases L-rhamnose from citrus flavonoids such as naringin, rutin and hesperidin, and the arabinogalactan-protein (AGP) gum arabic. AGPs are a family of proteoglycans that are localized on the cell surfaces of higher plants. Cleaves both the alpha-1,6 and the alpha-1,2-linked rhamnosyl residues. The chain is Alpha-L-rhamnosidase from Streptomyces avermitilis (strain ATCC 31267 / DSM 46492 / JCM 5070 / NBRC 14893 / NCIMB 12804 / NRRL 8165 / MA-4680).